The chain runs to 518 residues: Protein translocase subunit SecD (518 aa).

The next 6 helical transmembrane spans lie at 9–29 (IFLSIICTVFAVICALPNFMQ), 361–381 (LIGFIAVCIFMVWSYGVLGLF), 384–404 (IALSLALLYILALLSLFQATL), 406–426 (LPGIAGIILTMGMAVDANVLI), 452–474 (FATILDANLTTLIVAFLLYIFGV), and 486–506 (IGIISSMFSAIIITKLLIDIW).

It belongs to the SecD/SecF family. SecD subfamily. As to quaternary structure, forms a complex with SecF. Part of the essential Sec protein translocation apparatus which comprises SecA, SecYEG and auxiliary proteins SecDF-YajC and YidC.

It localises to the cell inner membrane. In terms of biological role, part of the Sec protein translocase complex. Interacts with the SecYEG preprotein conducting channel. SecDF uses the proton motive force (PMF) to complete protein translocation after the ATP-dependent function of SecA. This Rickettsia conorii (strain ATCC VR-613 / Malish 7) protein is Protein translocase subunit SecD.